Consider the following 309-residue polypeptide: Homoserine O-succinyltransferase (309 aa).

Cys142 serves as the catalytic Acyl-thioester intermediate. The substrate site is built by Lys163 and Ser192. His235 functions as the Proton acceptor in the catalytic mechanism. Glu237 is an active-site residue. Residue Arg249 coordinates substrate.

The protein belongs to the MetA family.

The protein resides in the cytoplasm. The enzyme catalyses L-homoserine + succinyl-CoA = O-succinyl-L-homoserine + CoA. Its pathway is amino-acid biosynthesis; L-methionine biosynthesis via de novo pathway; O-succinyl-L-homoserine from L-homoserine: step 1/1. Its function is as follows. Transfers a succinyl group from succinyl-CoA to L-homoserine, forming succinyl-L-homoserine. The chain is Homoserine O-succinyltransferase from Edwardsiella ictaluri (strain 93-146).